An 86-amino-acid chain; its full sequence is Palustrin-3b (86 aa).

The signal sequence occupies residues 1–22 (MFTLKKPLLLIVLLGIISLSLC). Residues 23–36 (EQERNADEDEESEI) constitute a propeptide that is removed on maturation. The cysteines at positions 81 and 86 are disulfide-linked.

In terms of tissue distribution, expressed by the skin glands.

It is found in the secreted. Its function is as follows. Antimicrobial peptide. The protein is Palustrin-3b of Odorrana versabilis (Chinese bamboo leaf odorous frog).